Reading from the N-terminus, the 146-residue chain is Small ribosomal subunit protein bS6 (146 aa).

Residues 100–146 form a disordered region; sequence QSAMMRKRDDDDRGDRPDRGDRGRGPRPDRPPRRPRDDAAASDEGGF. The segment covering 105–138 has biased composition (basic and acidic residues); that stretch reads RKRDDDDRGDRPDRGDRGRGPRPDRPPRRPRDDA.

The protein belongs to the bacterial ribosomal protein bS6 family.

In terms of biological role, binds together with bS18 to 16S ribosomal RNA. This chain is Small ribosomal subunit protein bS6, found in Methylocella silvestris (strain DSM 15510 / CIP 108128 / LMG 27833 / NCIMB 13906 / BL2).